A 180-amino-acid polypeptide reads, in one-letter code: CD-NTase/cGAS isopeptidase (180 aa).

One can recognise an MPN domain in the interval 33-165 (IVISSSTIEQ…AGSYSLSASV (133 aa)). Glu54 functions as the Proton donor/acceptor in the catalytic mechanism. Zn(2+) contacts are provided by His115, His117, and Asp128.

The protein belongs to the peptidase M67B family. Cap3 isopeptidase subfamily.

In terms of biological role, metalloprotease priming reversal component of a CBASS antivirus system. CBASS (cyclic oligonucleotide-based antiphage signaling system) provides immunity against bacteriophages. The CD-NTase protein (CdnD) synthesizes cyclic nucleotides in response to infection; these serve as specific second messenger signals. The signals activate a diverse range of effectors, leading to bacterial cell death and thus abortive phage infection. A type II-C(AAG) CBASS system. Functionally, reverses the primed state of DncV, the CD-NTase. Cleaves a CdnD-GFP (green fluorescent protein) fusion protein precisely at the C-terminus of CdnD. Overexpression decreases the efficacy of CBASS protection against phage T2. Antagonism of phage defense upon overexpression is CBASS-system specific, Cap3 from this bacteria only antagonizes its cognate CBASS system and not that of C.freundii, E.coli or V.cholerae. Its function is as follows. Protects E.coli against phage T2 infection. When the cdnD-cap2-cap3-cap4 operon is introduced in E.coli there is a more than 10(3) decrease in the efficiency of T2 plaque formation. The operon does not protect against phage T5 and only about 10-fold against T7. This is CD-NTase/cGAS isopeptidase from Enterobacter hormaechei subsp. hoffmannii (strain UCI 50).